A 446-amino-acid polypeptide reads, in one-letter code: SPARC-related modular calcium-binding protein 2 (446 aa).

The first 21 residues, 1 to 21 (MLLPQLCWLPLLAGLLPPVPA), serve as a signal peptide directing secretion. Residues 34-86 (QDKDKDCSLDCAGSPQKPLCASDGRTFLSRCEFQRAKCKDPQLEIAYRGNCKD) enclose the Kazal-like domain. 6 disulfide bridges follow: C40–C71, C44–C64, C53–C84, C90–C113, C124–C131, and C133–C153. Residues 87–153 (VSRCVAERKY…TAVAHKTPRC (67 aa)) form the Thyroglobulin type-1 1 domain. The segment at 147–228 (AHKTPRCPGS…EHQSALEEAK (82 aa)) is disordered. The span at 161–172 (LPQREGTGKTDD) shows a compositional bias: basic and acidic residues. N206 carries N-linked (GlcNAc...) asparagine glycosylation. Polar residues predominate over residues 206 to 216 (NKTNKNSVSSC). Positions 213-281 (VSSCDQEHQS…TSTRYEQPKC (69 aa)) constitute a Thyroglobulin type-1 2 domain. Intrachain disulfides connect C216-C240, C251-C258, and C260-C281. Over residues 217 to 228 (DQEHQSALEEAK) the composition is skewed to basic and acidic residues. 2 consecutive EF-hand domains span residues 347–382 (LEER…LRKK) and 384–419 (KPKK…AKED). D360, N362, S364, D366, E371, D397, N399, D401, S403, and E408 together coordinate Ca(2+). The N-linked (GlcNAc...) asparagine glycan is linked to N362. Positions 416–446 (AKEDGKADTKKRHTPRGHAESTSNRQPRKQG) are disordered.

In terms of assembly, binds various proteins from the extracellular matrix.

The protein resides in the secreted. It is found in the extracellular space. Its subcellular location is the extracellular matrix. It localises to the basement membrane. In terms of biological role, promotes matrix assembly and cell adhesiveness. Can stimulate endothelial cell proliferation, migration, as well as angiogenesis. This chain is SPARC-related modular calcium-binding protein 2 (SMOC2), found in Homo sapiens (Human).